Reading from the N-terminus, the 529-residue chain is Structure-specific endonuclease subunit SLX1 homolog 1 (529 aa).

Positions 4-89 (RFHCVYLLTS…PTKSTRLKTQ (86 aa)) constitute a GIY-YIG domain. Residues 231–364 (CALCSLPLRS…PCQPCPCPLC (134 aa)) form an SLX1-type zinc finger. Disordered regions lie at residues 275 to 305 (VTMG…MDAH), 409 to 437 (NSSL…YCGD), and 470 to 501 (SVSL…RMTD). A compositionally biased stretch (basic and acidic residues) spans 282–297 (RNERSGEYSNKIKDDS).

Belongs to the SLX1 family. Forms a heterodimer with a member of the SLX4 family. A divalent metal cation serves as cofactor.

Its subcellular location is the nucleus. In terms of biological role, catalytic subunit of a heterodimeric structure-specific endonuclease that resolves DNA secondary structures generated during DNA repair and recombination. Has endonuclease activity towards branched DNA substrates, introducing single-strand cuts in duplex DNA close to junctions with ss-DNA. The sequence is that of Structure-specific endonuclease subunit SLX1 homolog 1 from Trypanosoma cruzi (strain CL Brener).